The chain runs to 226 residues: MKIHYYGHSCFGLEIGSSFLLFDPFISQNPLSDPTLLDTLNPQYILISHGHFDHIADASPIAKRTQAPILSNFEITLWLEKQGLSQVLPMNLGGNRSFDFGKIHYVQAAHSSSLPDGSYGGTAGGFIVEGPEGILYYAGDTALMSDMKLFGECFQIDIALLPIGGTFTMGVDEAIRAAHLLNCKQVMGVHFDTFEAIKIDHEEAKKKFQDEEIPFRLLKVKESLIL.

The protein belongs to the UPF0173 family.

This chain is UPF0173 metal-dependent hydrolase Minf_0129, found in Methylacidiphilum infernorum (isolate V4) (Methylokorus infernorum (strain V4)).